A 115-amino-acid chain; its full sequence is Large ribosomal subunit protein bL19 (115 aa).

Belongs to the bacterial ribosomal protein bL19 family.

This protein is located at the 30S-50S ribosomal subunit interface and may play a role in the structure and function of the aminoacyl-tRNA binding site. The protein is Large ribosomal subunit protein bL19 of Streptococcus thermophilus (strain CNRZ 1066).